The following is a 146-amino-acid chain: Large ribosomal subunit protein uL11 (146 aa).

Belongs to the universal ribosomal protein uL11 family. As to quaternary structure, part of the ribosomal stalk of the 50S ribosomal subunit. Interacts with L10 and the large rRNA to form the base of the stalk. L10 forms an elongated spine to which L12 dimers bind in a sequential fashion forming a multimeric L10(L12)X complex. Post-translationally, one or more lysine residues are methylated.

Forms part of the ribosomal stalk which helps the ribosome interact with GTP-bound translation factors. The sequence is that of Large ribosomal subunit protein uL11 from Buchnera aphidicola subsp. Baizongia pistaciae (strain Bp).